A 356-amino-acid chain; its full sequence is Protein RecA (356 aa).

68–75 (GPESSGKT) serves as a coordination point for ATP.

It belongs to the RecA family.

Its subcellular location is the cytoplasm. Functionally, can catalyze the hydrolysis of ATP in the presence of single-stranded DNA, the ATP-dependent uptake of single-stranded DNA by duplex DNA, and the ATP-dependent hybridization of homologous single-stranded DNAs. It interacts with LexA causing its activation and leading to its autocatalytic cleavage. The protein is Protein RecA of Clostridium botulinum (strain Eklund 17B / Type B).